The sequence spans 286 residues: Glycine--tRNA ligase alpha subunit (286 aa).

Belongs to the class-II aminoacyl-tRNA synthetase family. As to quaternary structure, tetramer of two alpha and two beta subunits.

It is found in the cytoplasm. It carries out the reaction tRNA(Gly) + glycine + ATP = glycyl-tRNA(Gly) + AMP + diphosphate. This chain is Glycine--tRNA ligase alpha subunit (glyQ), found in Thermotoga maritima (strain ATCC 43589 / DSM 3109 / JCM 10099 / NBRC 100826 / MSB8).